We begin with the raw amino-acid sequence, 169 residues long: S-ribosylhomocysteine lyase (169 aa).

3 residues coordinate Fe cation: histidine 54, histidine 58, and cysteine 128.

It belongs to the LuxS family. In terms of assembly, homodimer. It depends on Fe cation as a cofactor.

It carries out the reaction S-(5-deoxy-D-ribos-5-yl)-L-homocysteine = (S)-4,5-dihydroxypentane-2,3-dione + L-homocysteine. In terms of biological role, involved in the synthesis of autoinducer 2 (AI-2) which is secreted by bacteria and is used to communicate both the cell density and the metabolic potential of the environment. The regulation of gene expression in response to changes in cell density is called quorum sensing. Catalyzes the transformation of S-ribosylhomocysteine (RHC) to homocysteine (HC) and 4,5-dihydroxy-2,3-pentadione (DPD). The chain is S-ribosylhomocysteine lyase from Shewanella amazonensis (strain ATCC BAA-1098 / SB2B).